The sequence spans 361 residues: Epi-isozizaene synthase (361 aa).

Mg(2+) is bound by residues D99, D103, N240, S244, and E248. The short motif at 99-103 (DDRHD) is the DDXXD motif element.

The protein belongs to the terpene synthase family. Mg(2+) is required as a cofactor. Mn(2+) serves as cofactor. The cofactor is Fe(3+).

It catalyses the reaction (2E,6E)-farnesyl diphosphate = (+)-epi-isozizaene + diphosphate. It functions in the pathway sesquiterpene biosynthesis; epi-isozizaene biosynthesis. In terms of biological role, catalyzes the cyclization of farnesyl diphosphate (FPP) to the sesquiterpene epi-isozizaene. The chain is Epi-isozizaene synthase (cyc1) from Streptomyces coelicolor (strain ATCC BAA-471 / A3(2) / M145).